A 401-amino-acid polypeptide reads, in one-letter code: Pyruvyl transferase 1 (401 aa).

An N-terminal signal peptide occupies residues 1–30 (MFANINIRKSVWLFLLAAVSCTLFIYGVTR). The interval 38 to 64 (NPSSLTSPSSSTSVDKKKPLFTKSPRN) is disordered. Over residues 39-50 (PSSLTSPSSSTS) the composition is skewed to low complexity.

The protein belongs to the polysaccharide pyruvyl transferase family.

Functionally, involved in cell wall biogenesis. Has a role in the addition of Gal-beta1,3 moieties to galactomannans and their subsequent pyruvylation. The protein is Pyruvyl transferase 1 (pvg1) of Schizosaccharomyces pombe (strain 972 / ATCC 24843) (Fission yeast).